The following is a 156-amino-acid chain: E3 ubiquitin-protein ligase RNF181 (156 aa).

An RING-type; atypical zinc finger spans residues 79–120; that stretch reads CPVCLLEFEEGETVRQLPCEHLFHSSCILPWLGKTNSCPLCR.

It belongs to the RNF181 family.

The catalysed reaction is S-ubiquitinyl-[E2 ubiquitin-conjugating enzyme]-L-cysteine + [acceptor protein]-L-lysine = [E2 ubiquitin-conjugating enzyme]-L-cysteine + N(6)-ubiquitinyl-[acceptor protein]-L-lysine.. It participates in protein modification; protein ubiquitination. In terms of biological role, E3 ubiquitin-protein ligase which accepts ubiquitin from an E2 ubiquitin-conjugating enzyme in the form of a thioester and then directly transfers the ubiquitin to targeted substrates. Catalyzes monoubiquitination of 26S proteasome subunit PSMC2/RPT1. The sequence is that of E3 ubiquitin-protein ligase RNF181 (rnf181) from Xenopus tropicalis (Western clawed frog).